We begin with the raw amino-acid sequence, 518 residues long: GMP synthase [glutamine-hydrolyzing] (518 aa).

The Glutamine amidotransferase type-1 domain occupies 13–203 (KIIVLDFGSQ…ALNVCGCKGD (191 aa)). C90 serves as the catalytic Nucleophile. Catalysis depends on residues H177 and E179. The GMPS ATP-PPase domain maps to 204-393 (WTMENFSEVE…LGMPDAIVWR (190 aa)). 231–237 (SGGVDSS) is a binding site for ATP.

In terms of assembly, homodimer.

The catalysed reaction is XMP + L-glutamine + ATP + H2O = GMP + L-glutamate + AMP + diphosphate + 2 H(+). The protein operates within purine metabolism; GMP biosynthesis; GMP from XMP (L-Gln route): step 1/1. Its function is as follows. Catalyzes the synthesis of GMP from XMP. This Listeria monocytogenes serovar 1/2a (strain ATCC BAA-679 / EGD-e) protein is GMP synthase [glutamine-hydrolyzing].